Reading from the N-terminus, the 318-residue chain is Transaldolase (318 aa).

The active-site Schiff-base intermediate with substrate is Lys132.

The protein belongs to the transaldolase family. Type 1 subfamily. Homodimer.

The protein localises to the cytoplasm. It catalyses the reaction D-sedoheptulose 7-phosphate + D-glyceraldehyde 3-phosphate = D-erythrose 4-phosphate + beta-D-fructose 6-phosphate. The protein operates within carbohydrate degradation; pentose phosphate pathway; D-glyceraldehyde 3-phosphate and beta-D-fructose 6-phosphate from D-ribose 5-phosphate and D-xylulose 5-phosphate (non-oxidative stage): step 2/3. Functionally, transaldolase is important for the balance of metabolites in the pentose-phosphate pathway. The polypeptide is Transaldolase (Allorhizobium ampelinum (strain ATCC BAA-846 / DSM 112012 / S4) (Agrobacterium vitis (strain S4))).